We begin with the raw amino-acid sequence, 169 residues long: Der GTPase-activating protein YihI (169 aa).

Disordered regions lie at residues 1–92 (MKPS…EKPM) and 146–169 (SYDDDEEEEEDEKQEDMMRLLRGN). The segment covering 10-19 (SKGHAKARRK) has biased composition (basic residues). Over residues 20–30 (TREELDQEARD) the composition is skewed to basic and acidic residues. A compositionally biased stretch (basic residues) spans 31–40 (RKRQKKRRGH). Over residues 49-58 (GNTTSGSKGQ) the composition is skewed to polar residues. Over residues 147–159 (YDDDEEEEEDEKQ) the composition is skewed to acidic residues. The segment covering 160-169 (EDMMRLLRGN) has biased composition (basic and acidic residues).

Belongs to the YihI family. In terms of assembly, interacts with Der.

Its function is as follows. A GTPase-activating protein (GAP) that modifies Der/EngA GTPase function. May play a role in ribosome biogenesis. The polypeptide is Der GTPase-activating protein YihI (Escherichia coli O1:K1 / APEC).